We begin with the raw amino-acid sequence, 219 residues long: Protein Cmaq_0360 (219 aa).

The 197-residue stretch at 8 to 204 (EQGKFLVRLA…EKGPRGDVYE (197 aa)) folds into the AMMECR1 domain.

This is Protein Cmaq_0360 from Caldivirga maquilingensis (strain ATCC 700844 / DSM 13496 / JCM 10307 / IC-167).